The following is a 344-amino-acid chain: Uroporphyrinogen decarboxylase (344 aa).

Residues 25-29 (RQAGR), D75, Y152, S207, and H323 contribute to the substrate site.

It belongs to the uroporphyrinogen decarboxylase family. Homodimer.

It localises to the cytoplasm. The enzyme catalyses uroporphyrinogen III + 4 H(+) = coproporphyrinogen III + 4 CO2. Its pathway is porphyrin-containing compound metabolism; protoporphyrin-IX biosynthesis; coproporphyrinogen-III from 5-aminolevulinate: step 4/4. In terms of biological role, catalyzes the decarboxylation of four acetate groups of uroporphyrinogen-III to yield coproporphyrinogen-III. The polypeptide is Uroporphyrinogen decarboxylase (Ruegeria pomeroyi (strain ATCC 700808 / DSM 15171 / DSS-3) (Silicibacter pomeroyi)).